We begin with the raw amino-acid sequence, 420 residues long: Glucose-1-phosphate adenylyltransferase (420 aa).

Alpha-D-glucose 1-phosphate contacts are provided by residues Tyr-107, Gly-172, 187–188 (EK), and Ser-205.

It belongs to the bacterial/plant glucose-1-phosphate adenylyltransferase family. As to quaternary structure, homotetramer.

It carries out the reaction alpha-D-glucose 1-phosphate + ATP + H(+) = ADP-alpha-D-glucose + diphosphate. It functions in the pathway glycan biosynthesis; glycogen biosynthesis. Its function is as follows. Involved in the biosynthesis of ADP-glucose, a building block required for the elongation reactions to produce glycogen. Catalyzes the reaction between ATP and alpha-D-glucose 1-phosphate (G1P) to produce pyrophosphate and ADP-Glc. The protein is Glucose-1-phosphate adenylyltransferase of Bradyrhizobium diazoefficiens (strain JCM 10833 / BCRC 13528 / IAM 13628 / NBRC 14792 / USDA 110).